Consider the following 207-residue polypeptide: Guanylate kinase (207 aa).

Residues Gly4 to Arg184 form the Guanylate kinase-like domain. Position 11–18 (Ala11–Ser18) interacts with ATP.

Belongs to the guanylate kinase family.

The protein localises to the cytoplasm. It catalyses the reaction GMP + ATP = GDP + ADP. Essential for recycling GMP and indirectly, cGMP. This Buchnera aphidicola subsp. Baizongia pistaciae (strain Bp) protein is Guanylate kinase.